A 201-amino-acid chain; its full sequence is Adapter protein MecA 1 (201 aa).

It belongs to the MecA family. In terms of assembly, homodimer.

Functionally, enables the recognition and targeting of unfolded and aggregated proteins to the ClpC protease or to other proteins involved in proteolysis. Acts negatively in the development of competence by binding ComK and recruiting it to the ClpCP protease. When overexpressed, inhibits sporulation. Also involved in Spx degradation by ClpC. The chain is Adapter protein MecA 1 (mecA1) from Halalkalibacterium halodurans (strain ATCC BAA-125 / DSM 18197 / FERM 7344 / JCM 9153 / C-125) (Bacillus halodurans).